We begin with the raw amino-acid sequence, 477 residues long: Protein DETOXIFICATION 5 (477 aa).

12 consecutive transmembrane segments (helical) span residues 38–58, 72–92, 113–133, 146–166, 187–207, 211–231, 263–283, 292–312, 333–353, 376–396, 411–431, and 436–456; these read AAPM…SVMV, LATA…VGAL, FSAI…WFYM, ISKV…AQAV, AITT…AFGL, GAAL…ALYV, AAMT…SGLL, VLSI…GIGA, AVFA…TLLF, LSSL…LDGV, VVAY…WGHM, and LWIG…IVTA.

This sequence belongs to the multi antimicrobial extrusion (MATE) (TC 2.A.66.1) family.

It is found in the membrane. The sequence is that of Protein DETOXIFICATION 5 from Arabidopsis thaliana (Mouse-ear cress).